We begin with the raw amino-acid sequence, 132 residues long: CDGSH iron-sulfur domain-containing protein 2 homolog (132 aa).

Topologically, residues 1–35 (MEPISHLVKSSLPNYLSSLPVPDSLGGWFKLSFKD) are lumenal. A helical transmembrane segment spans residues 36–58 (WLALIPPTAVLAGLGYTAYLAFC). Over 59 to 132 (PAAQCSAKSA…VGPVVVSKKK (74 aa)) the chain is Cytoplasmic. [2Fe-2S] cluster contacts are provided by Cys97, Cys99, Cys108, and His112.

The protein belongs to the CISD protein family. CISD2 subfamily. Requires [2Fe-2S] cluster as cofactor.

It localises to the endoplasmic reticulum membrane. This chain is CDGSH iron-sulfur domain-containing protein 2 homolog, found in Drosophila grimshawi (Hawaiian fruit fly).